A 1486-amino-acid polypeptide reads, in one-letter code: Chromosome partition protein MukB (1486 aa).

34 to 41 (GGNGAGKS) contributes to the ATP binding site. Coiled coils occupy residues 334 to 418 (SDHL…QYNQ), 444 to 480 (LETF…QAYQ), and 509 to 603 (RHLA…RAPV). The flexible hinge stretch occupies residues 666 to 783 (PGGSEDQRLN…EVPLFGRAAR (118 aa)). Coiled coils occupy residues 835-923 (EAEI…AKLE), 977-1115 (EMLS…TAKA), and 1209-1266 (VEAI…QNVS).

This sequence belongs to the SMC family. MukB subfamily. Homodimerization via its hinge domain. Binds to DNA via its C-terminal region. Interacts, and probably forms a ternary complex, with MukE and MukF via its C-terminal region. The complex formation is stimulated by calcium or magnesium. Interacts with tubulin-related protein FtsZ.

It is found in the cytoplasm. The protein resides in the nucleoid. In terms of biological role, plays a central role in chromosome condensation, segregation and cell cycle progression. Functions as a homodimer, which is essential for chromosome partition. Involved in negative DNA supercoiling in vivo, and by this means organize and compact chromosomes. May achieve or facilitate chromosome segregation by condensation DNA from both sides of a centrally located replisome during cell division. This is Chromosome partition protein MukB from Shigella sonnei (strain Ss046).